The primary structure comprises 503 residues: MSPSPALHAAAFQGIGAPDIQRFHINLSVGSNVNRYPAKQHARKVASKLGISRGLIYLVGKPTVFLDDSDQTIPFRQRRYFYYLSGANEPDCHLTYDIAKDHLTLYVPDFDLRQTVWMGPTISIGEALDRYDIDNARYAGSLQTDISGWLRLRGDDSQIILLHPDHRPPIEYEQDLFETKNLVPAMNAARGVKDSYEIEMIRKANIVSGLAHTAVLEKIGQMTNESDIAGLFLETCMTHGAPDQAYGIIAASGENGATLHYMKNNEDFGNRLSVCLDAGAEYECYASDVTRTFPISRTGEWPTPEVRDIYLAVERMQEECIRLIKPGVRFRDVHLHASRVAVEELLKLGVFQKDNSVDAIMASGAVSVFFPHGLGHHVGLEVHDVAEQSVMAATDDSSPRTRVRGFLMQPASAMSAALLEESMIVTVEPGIYFNRLALKNARTLPIARFIDFDVVERYYPIGGVRIEDDILVTATGYENLTTAPKGEEALDIIRRSSVKSSRA.

Mn(2+)-binding residues include D277, D288, E428, and E467.

The protein belongs to the peptidase M24B family. Mn(2+) is required as a cofactor.

The enzyme catalyses Release of any N-terminal amino acid, including proline, that is linked to proline, even from a dipeptide or tripeptide.. Its function is as follows. Catalyzes the removal of a penultimate prolyl residue from the N-termini of peptides. The sequence is that of Probable Xaa-Pro aminopeptidase TSTA_094700 from Talaromyces stipitatus (strain ATCC 10500 / CBS 375.48 / QM 6759 / NRRL 1006) (Penicillium stipitatum).